A 135-amino-acid chain; its full sequence is Large ribosomal subunit protein eL32 (135 aa).

A Glycyl lysine isopeptide (Lys-Gly) (interchain with G-Cter in SUMO2) cross-link involves residue Lys9. Lys50 is subject to N6-succinyllysine. Ser62 carries the phosphoserine modification.

Belongs to the eukaryotic ribosomal protein eL32 family. Component of the large ribosomal subunit.

The protein resides in the cytoplasm. Component of the large ribosomal subunit. The ribosome is a large ribonucleoprotein complex responsible for the synthesis of proteins in the cell. The polypeptide is Large ribosomal subunit protein eL32 (RPL32) (Oryctolagus cuniculus (Rabbit)).